The sequence spans 655 residues: Broad substrate specificity ATP-binding cassette transporter ABCG2 (655 aa).

The Cytoplasmic segment spans residues Met1–Ser395. The region spanning Leu37 to Ala286 is the ABC transporter domain. ATP-binding positions include Gly80–Ser87, Arg184–Glu190, Glu211, and His243. Phosphothreonine; by PIM1 is present on Thr362. The region spanning Leu389–Leu651 is the ABC transmembrane type-2 domain. A helical transmembrane segment spans residues Ile396–Leu416. Topologically, residues Lys417–Gly428 are extracellular. The chain crosses the membrane as a helical span at residues Val429–Val449. The Cytoplasmic segment spans residues Val450–Asp477. A helical membrane pass occupies residues Leu478–Gly498. Topologically, residues Leu499–Phe506 are extracellular. The chain crosses the membrane as a helical span at residues Phe507–Ile527. Residues Ala528–Ser535 lie on the Cytoplasmic side of the membrane. Residues Val536 to Val556 form a helical membrane-spanning segment. The Extracellular segment spans residues Asn557 to His630. A disulfide bridge links Cys592 with Cys608. N-linked (GlcNAc...) asparagine glycosylation occurs at Asn596. The chain crosses the membrane as a helical span at residues Val631–Leu651. Topologically, residues Lys652 to Ser655 are cytoplasmic.

The protein belongs to the ABC transporter superfamily. ABCG family. Eye pigment precursor importer (TC 3.A.1.204) subfamily. As to quaternary structure, homodimer; disulfide-linked. The minimal functional unit is a homodimer, but the major oligomeric form in plasma membrane is a homotetramer with possibility of higher order oligomerization up to homododecamers. In terms of processing, N-glycosylated. Glycosylation-deficient ABCG2 is normally expressed and functional. Post-translationally, phosphorylated. Phosphorylation at Thr-362 by PIM1 is induced by drugs like mitoxantrone and is associated with cells increased drug resistance. It regulates the localization to the plasma membrane, the homooligomerization and therefore, the activity of the transporter. As to expression, highly expressed in placenta. Low expression in small intestine, liver and colon. Expressed in brain (at protein level).

The protein resides in the cell membrane. Its subcellular location is the apical cell membrane. It is found in the mitochondrion membrane. The catalysed reaction is ATP + H2O + xenobioticSide 1 = ADP + phosphate + xenobioticSide 2.. It catalyses the reaction urate(in) + ATP + H2O = urate(out) + ADP + phosphate + H(+). It carries out the reaction indoxyl sulfate(in) + ATP + H2O = indoxyl sulfate(out) + ADP + phosphate + H(+). The enzyme catalyses sphing-4-enine 1-phosphate(in) + ATP + H2O = sphing-4-enine 1-phosphate(out) + ADP + phosphate + H(+). The catalysed reaction is estrone 3-sulfate(in) + ATP + H2O = estrone 3-sulfate(out) + ADP + phosphate + H(+). It catalyses the reaction dehydroepiandrosterone 3-sulfate(in) + ATP + H2O = dehydroepiandrosterone 3-sulfate(out) + ADP + phosphate + H(+). It carries out the reaction 4-methylumbelliferone sulfate(in) + ATP + H2O = 4-methylumbelliferone sulfate(out) + ADP + phosphate + H(+). The enzyme catalyses 5,7-dimethyl-2-methylamino-4-(3-pyridylmethyl)-1,3-benzothiazol-6-yl beta-D-glucuronate(in) + ATP + H2O = 5,7-dimethyl-2-methylamino-4-(3-pyridylmethyl)-1,3-benzothiazol-6-yl beta-D-glucuronate(out) + ADP + phosphate + H(+). The catalysed reaction is 4-methylumbelliferone beta-D-glucuronate(in) + ATP + H2O = 4-methylumbelliferone beta-D-glucuronate(out) + ADP + phosphate + H(+). It catalyses the reaction 5,7-dimethyl-2-methylamino-4-(3-pyridylmethyl)-1,3-benzothiazol-6-yl sulfate(in) + ATP + H2O = 5,7-dimethyl-2-methylamino-4-(3-pyridylmethyl)-1,3-benzothiazol-6-yl sulfate(out) + ADP + phosphate + H(+). It carries out the reaction 17beta-estradiol 17-O-(beta-D-glucuronate)(in) + ATP + H2O = 17beta-estradiol 17-O-(beta-D-glucuronate)(out) + ADP + phosphate + H(+). The enzyme catalyses methotrexate(in) + ATP + H2O = methotrexate(out) + ADP + phosphate + H(+). The catalysed reaction is riboflavin(in) + ATP + H2O = riboflavin(out) + ADP + phosphate + H(+). It catalyses the reaction pheophorbide a(in) + ATP + H2O = pheophorbide a(out) + ADP + phosphate + H(+). It carries out the reaction itaconate(in) + ATP + H2O = itaconate(out) + ADP + phosphate + H(+). Its activity is regulated as follows. Specifically inhibited by the fungal toxin fumitremorgin C and Ko143. Functionally, broad substrate specificity ATP-dependent transporter of the ATP-binding cassette (ABC) family that actively extrudes a wide variety of physiological compounds, dietary toxins and xenobiotics from cells. Involved in porphyrin homeostasis, mediating the export of protoporphyrin IX (PPIX) from both mitochondria to cytosol and cytosol to extracellular space, it also functions in the cellular export of heme. Also mediates the efflux of sphingosine-1-P from cells. Acts as a urate exporter functioning in both renal and extrarenal urate excretion. In kidney, it also functions as a physiological exporter of the uremic toxin indoxyl sulfate. Also involved in the excretion of steroids like estrone 3-sulfate/E1S, 3beta-sulfooxy-androst-5-en-17-one/DHEAS, and other sulfate conjugates. Mediates the secretion of the riboflavin and biotin vitamins into milk. Extrudes pheophorbide a, a phototoxic porphyrin catabolite of chlorophyll, reducing its bioavailability. Plays an important role in the exclusion of xenobiotics from the brain. It confers to cells a resistance to multiple drugs and other xenobiotics including mitoxantrone, pheophorbide, camptothecin, methotrexate, azidothymidine, and the anthracyclines daunorubicin and doxorubicin, through the control of their efflux. In placenta, it limits the penetration of drugs from the maternal plasma into the fetus. May play a role in early stem cell self-renewal by blocking differentiation. In inflammatory macrophages, exports itaconate from the cytosol to the extracellular compartment and limits the activation of TFEB-dependent lysosome biogenesis involved in antibacterial innate immune response. The sequence is that of Broad substrate specificity ATP-binding cassette transporter ABCG2 (ABCG2) from Homo sapiens (Human).